Consider the following 223-residue polypeptide: Ribose-5-phosphate isomerase A (223 aa).

Residues 32 to 35 (TGST), 85 to 88 (DGAD), and 98 to 101 (KGGG) contribute to the substrate site. Glutamate 107 serves as the catalytic Proton acceptor. Lysine 125 provides a ligand contact to substrate.

It belongs to the ribose 5-phosphate isomerase family. As to quaternary structure, homodimer.

The enzyme catalyses aldehydo-D-ribose 5-phosphate = D-ribulose 5-phosphate. It participates in carbohydrate degradation; pentose phosphate pathway; D-ribose 5-phosphate from D-ribulose 5-phosphate (non-oxidative stage): step 1/1. Its function is as follows. Catalyzes the reversible conversion of ribose-5-phosphate to ribulose 5-phosphate. This is Ribose-5-phosphate isomerase A from Marinomonas sp. (strain MWYL1).